A 405-amino-acid chain; its full sequence is Scramblase ANY1 (405 aa).

Over 1–51 (MSTTGPLDATLIRDVAVATATKASYDMSDTLYSYLPKVDQFYIPEWLTMQF) the chain is Cytoplasmic. The chain crosses the membrane as a helical span at residues 52–72 (IANNLISFTPLFSYGTTIISI). The Lumenal segment spans residues 73-76 (EKCK). The helical transmembrane segment at 77-97 (TALGFSIDICATMLIASILRI) threads the bilayer. Over 98-103 (SYYLIT) the chain is Cytoplasmic. Residues 104-124 (PYEITLLRQSLVMIFIQLILL) form a helical membrane-spanning segment. Over 125-177 (RTSLKYRPDEYKYQNLTDVESLSHLIHDIWFEFFSCINRPKFLSEDWKNLIKS) the chain is Lumenal. The helical transmembrane segment at 178–198 (LSFTNLLKFSFKIFLAFFYKI) threads the bilayer. At 199 to 223 (LKFFDPNFKRIGAFWQWDDDKNFWR) the chain is on the cytoplasmic side. The helical transmembrane segment at 224–244 (FLALFATVQILVTFFISNILN) threads the bilayer. The Lumenal portion of the chain corresponds to 245 to 254 (WDSLAQGLGS). In terms of domain architecture, PQ-loop spans 252–309 (LGSIIGSLGLLVESLLPLPQIAILYKLKSVQGFKLILLVSWLCGDTLKITYLIFGAKN). Residues 255-275 (IIGSLGLLVESLLPLPQIAIL) form a helical membrane-spanning segment. The Cytoplasmic segment spans residues 276–283 (YKLKSVQG). Residues 284 to 306 (FKLILLVSWLCGDTLKITYLIFG) form a helical membrane-spanning segment. Residues 307-312 (AKNISA) are Lumenal-facing. The chain crosses the membrane as a helical span at residues 313 to 335 (LFVIFALFQMSLDFYIGGQYIYY). Topologically, residues 336–405 (RYYYPKLRHQ…GKSQAQAVTL (70 aa)) are cytoplasmic. The interval 379 to 405 (LKQDSNDTSDSPQDDQVGKSQAQAVTL) is disordered. Over residues 396–405 (GKSQAQAVTL) the composition is skewed to polar residues.

As to quaternary structure, interacts with NEO1.

It is found in the golgi apparatus membrane. The protein resides in the late endosome membrane. Phospholipid scramblase that transports phosphatidylserine (PS) and phosphatidylethalonamine (PE) bidirectionally from one leaflet to the other of the phospholipid bilayer to at least partially collapse the membrane asymmetry established by NEO1 and other flippases. The PS scramblase activity has been disputed. Functions in the trafficking pathway from endosomes to the trans-Golgi network (TGN). The polypeptide is Scramblase ANY1 (Saccharomyces cerevisiae (strain ATCC 204508 / S288c) (Baker's yeast)).